We begin with the raw amino-acid sequence, 29 residues long: Omega-conotoxins GVIIA/GVIIB (29 aa).

Cystine bridges form between cysteine 1–cysteine 16, cysteine 8–cysteine 19, and cysteine 15–cysteine 26. 4-hydroxyproline occurs at positions 4 and 7.

As to expression, expressed by the venom duct.

It localises to the secreted. Functionally, omega-conotoxins act at presynaptic membranes, they bind and block voltage-gated calcium channels (Cav). The sequence is that of Omega-conotoxins GVIIA/GVIIB from Conus geographus (Geography cone).